Consider the following 115-residue polypeptide: Ribonuclease P protein component (115 aa).

Belongs to the RnpA family. As to quaternary structure, consists of a catalytic RNA component (M1 or rnpB) and a protein subunit.

It catalyses the reaction Endonucleolytic cleavage of RNA, removing 5'-extranucleotides from tRNA precursor.. Functionally, RNaseP catalyzes the removal of the 5'-leader sequence from pre-tRNA to produce the mature 5'-terminus. It can also cleave other RNA substrates such as 4.5S RNA. The protein component plays an auxiliary but essential role in vivo by binding to the 5'-leader sequence and broadening the substrate specificity of the ribozyme. This Bacillus cereus (strain G9842) protein is Ribonuclease P protein component.